A 223-amino-acid chain; its full sequence is Urease accessory protein UreF (223 aa).

Belongs to the UreF family. UreD, UreF and UreG form a complex that acts as a GTP-hydrolysis-dependent molecular chaperone, activating the urease apoprotein by helping to assemble the nickel containing metallocenter of UreC. The UreE protein probably delivers the nickel.

The protein localises to the cytoplasm. Its function is as follows. Required for maturation of urease via the functional incorporation of the urease nickel metallocenter. This Mesorhizobium japonicum (strain LMG 29417 / CECT 9101 / MAFF 303099) (Mesorhizobium loti (strain MAFF 303099)) protein is Urease accessory protein UreF.